The chain runs to 178 residues: uncharacterized protein (178 aa).

The chain crosses the membrane as a helical span at residues 7-27 (LAIGTAILLIGMAYWTVSIVE).

The protein resides in the membrane. This is an uncharacterized protein from Methanocaldococcus jannaschii (strain ATCC 43067 / DSM 2661 / JAL-1 / JCM 10045 / NBRC 100440) (Methanococcus jannaschii).